The chain runs to 293 residues: Actin-related protein 2/3 complex subunit 2 (293 aa).

The protein belongs to the ARPC2 family. Component of the Arp2/3 complex composed of arpB/Arp2, arpC/Arp3, arcA/p41-arc, arcB/p34-arc, arcC/p21-arc, arcD/p20-arc and arcE/p16-arc. Interacts with carmil (via the region between the LRR domain and COOH-terminal proline-rich domain); carmil is required for Arp2/3-dependent actin nucleation. Arp2/3 complex, MyoB, MyoC, and the alpha and beta subunits of capping protein all form a larger complex with carmil.

The protein localises to the cytoplasm. It localises to the cytoskeleton. Its subcellular location is the cell projection. It is found in the cytosol. The protein resides in the cell cortex. The protein localises to the pseudopodium. Functionally, functions as a component of the Arp2/3 complex which is involved in regulation of actin polymerization and together with an activating nucleation-promoting factor (NPF) mediates the formation of branched actin networks. Seems to contact the pointed end of the daughter actin filament. The Arp2/3 complex is involved in organizing the actin system in cell motility and chemotaxis, in phagocytosis and macropinocytosis, at late steps of endosome processing, and in mitosis. In concert with a group of other proteins, the Arp2/3 complex plays a general role in the rapid activation and adaptation of the actin system to its multiple functions. The polypeptide is Actin-related protein 2/3 complex subunit 2 (arcB) (Dictyostelium discoideum (Social amoeba)).